Here is a 207-residue protein sequence, read N- to C-terminus: Glycerol-3-phosphate acyltransferase 1 (207 aa).

Helical transmembrane passes span 3-23 (YVIASLLGYIFGCIHGSQIVG), 53-73 (IVVALIDIFKATAAIFLLLIL), 85-105 (HIYIYLTALFVIIGHNYPITM), 127-147 (IALIGIGVLILFTIATDYLAV), and 154-174 (ISFLITTYYIFGLAPFFIVVG).

This sequence belongs to the PlsY family. As to quaternary structure, probably interacts with PlsX.

Its subcellular location is the cell membrane. The catalysed reaction is an acyl phosphate + sn-glycerol 3-phosphate = a 1-acyl-sn-glycero-3-phosphate + phosphate. It participates in lipid metabolism; phospholipid metabolism. Catalyzes the transfer of an acyl group from acyl-phosphate (acyl-PO(4)) to glycerol-3-phosphate (G3P) to form lysophosphatidic acid (LPA). This enzyme utilizes acyl-phosphate as fatty acyl donor, but not acyl-CoA or acyl-ACP. The protein is Glycerol-3-phosphate acyltransferase 1 of Oceanobacillus iheyensis (strain DSM 14371 / CIP 107618 / JCM 11309 / KCTC 3954 / HTE831).